The following is a 914-amino-acid chain: Probable dipeptidyl-aminopeptidase B (914 aa).

Residues 1 to 10 are compositionally biased toward acidic residues; sequence MGKSEADEDA. The tract at residues 1–81 is disordered; sequence MGKSEADEDA…DQPFLPSRKG (81 aa). Topologically, residues 1–89 are cytoplasmic; that stretch reads MGKSEADEDA…KGSGARARRV (89 aa). The span at 20 to 34 shows a compositional bias: low complexity; the sequence is SSSAASQTSSDSGLS. The helical; Signal-anchor for type II membrane protein transmembrane segment at 90–110 threads the bilayer; that stretch reads FWGLLLLCLAGWVLAFVLFLI. Over 111–914 the chain is Vacuolar; the sequence is QGRSGYSATS…FKRALPVFVH (804 aa). N-linked (GlcNAc...) asparagine glycosylation is found at Asn347 and Asn638. Ser752 functions as the Charge relay system in the catalytic mechanism. The N-linked (GlcNAc...) asparagine glycan is linked to Asn806. Active-site charge relay system residues include Asp829 and His862.

Belongs to the peptidase S9B family.

Its subcellular location is the vacuole membrane. The enzyme catalyses Release of an N-terminal dipeptide, Xaa-Yaa-|-Zaa-, from a polypeptide, preferentially when Yaa is Pro, provided Zaa is neither Pro nor hydroxyproline.. Type IV dipeptidyl-peptidase which removes N-terminal dipeptides sequentially from polypeptides having unsubstituted N-termini provided that the penultimate residue is proline. The chain is Probable dipeptidyl-aminopeptidase B (dapB) from Aspergillus terreus (strain NIH 2624 / FGSC A1156).